The chain runs to 322 residues: GATA transcription factor 8 (322 aa).

The tract at residues 93-168 is disordered; sequence TLVEKKEDSF…DKDRVKDNVC (76 aa). The span at 102–141 shows a compositional bias: low complexity; that stretch reads FSTNTDSSSSHSQFRSSSPVSVLESSSSSSQTTNTTSLVL. Basic residues predominate over residues 144–154; it reads KHGRPRTKRPR. The Nuclear localization signal motif lies at 147-154; that stretch reads RPRTKRPR. The segment at 225-279 adopts a GATA-type zinc-finger fold; the sequence is QYPLRKCMHCEVTKTPQWRLGPMGPKTLCNACGVRYKSGRLFPEYRPAASPTFTP.

The protein belongs to the type IV zinc-finger family. Class A subfamily.

It localises to the nucleus. Its function is as follows. Transcriptional activator that specifically binds 5'-GATA-3' or 5'-GAT-3' motifs within gene promoters. May be involved in the regulation of some light-responsive genes. The protein is GATA transcription factor 8 (GATA8) of Arabidopsis thaliana (Mouse-ear cress).